A 386-amino-acid polypeptide reads, in one-letter code: Ovalbumin (386 aa).

An N-acetylglycine modification is found at Gly-2. Residue Ser-69 is modified to Phosphoserine. Cys-74 and Cys-121 form a disulfide bridge. The N-linked (GlcNAc...) asparagine glycan is linked to Asn-293. Ser-345 is subject to Phosphoserine.

Belongs to the serpin family. Ov-serpin subfamily. Post-translationally, the N-terminus is blocked.

The protein localises to the secreted. Storage protein of egg white. Lacks protease inhibitory activity. This Dromaius novaehollandiae (Emu) protein is Ovalbumin (SERPINB14).